The primary structure comprises 295 residues: ATP synthase gamma chain (295 aa).

The protein belongs to the ATPase gamma chain family. F-type ATPases have 2 components, CF(1) - the catalytic core - and CF(0) - the membrane proton channel. CF(1) has five subunits: alpha(3), beta(3), gamma(1), delta(1), epsilon(1). CF(0) has three main subunits: a, b and c.

It localises to the cell inner membrane. In terms of biological role, produces ATP from ADP in the presence of a proton gradient across the membrane. The gamma chain is believed to be important in regulating ATPase activity and the flow of protons through the CF(0) complex. The protein is ATP synthase gamma chain of Paraburkholderia phymatum (strain DSM 17167 / CIP 108236 / LMG 21445 / STM815) (Burkholderia phymatum).